Consider the following 767-residue polypeptide: Photosystem I P700 chlorophyll a apoprotein A1 (767 aa).

The tract at residues 1 to 22 is disordered; it reads MTISPPESGEKNKKVLEDPVKA. The segment covering 8 to 22 has biased composition (basic and acidic residues); sequence SGEKNKKVLEDPVKA. Transmembrane regions (helical) follow at residues 76–99, 162–185, 201–225, 309–327, 368–391, 407–433, 455–477, and 558–576; these read IFSA…FHGA, LMAL…FHYH, LNHH…HIGA, VSHH…GHMY, RHAQ…HHMY, LGLF…IAMV, ALIS…LYIH, and LMIH…LILL. [4Fe-4S] cluster is bound by residues Cys600 and Cys609. 2 consecutive transmembrane segments (helical) span residues 616 to 637 and 681 to 703; these read HVFL…HFSW and ISMY…MFLF. Position 692 (His692) interacts with divinylchlorophyll a'. The divinyl chlorophyll a site is built by Met700 and Tyr708. Trp709 serves as a coordination point for phylloquinone. The chain crosses the membrane as a helical span at residues 741 to 761; that stretch reads AVGVTHFLVGGIATTWAFFHA.

It belongs to the PsaA/PsaB family. The PsaA/B heterodimer binds the P700 divinyl chlorophyll special pair and subsequent electron acceptors. PSI consists of a core antenna complex that captures photons, and an electron transfer chain that converts photonic excitation into a charge separation. The cyanobacterial PSI reaction center is composed of one copy each of PsaA,B,C,D,E,F,I,J,K,L,M and X, and forms trimeric complexes. Requires PSI electron transfer chain: 5 divinyl chlorophyll a, 1 divinyl chlorophyll a', 2 phylloquinones and 3 4Fe-4S clusters. PSI core antenna: 90 divinyl chlorophyll a, 22 carotenoids, 3 phospholipids and 1 galactolipid. P700 is a divinyl chlorophyll a/divinyl chlorophyll a' dimer, A0 is one or more divinyl chlorophyll a, A1 is one or both phylloquinones and FX is a shared 4Fe-4S iron-sulfur center. as cofactor.

The protein resides in the cellular thylakoid membrane. It carries out the reaction reduced [plastocyanin] + hnu + oxidized [2Fe-2S]-[ferredoxin] = oxidized [plastocyanin] + reduced [2Fe-2S]-[ferredoxin]. Its function is as follows. PsaA and PsaB bind P700, the primary electron donor of photosystem I (PSI), as well as the electron acceptors A0, A1 and FX. PSI is a plastocyanin/cytochrome c6-ferredoxin oxidoreductase, converting photonic excitation into a charge separation, which transfers an electron from the donor P700 chlorophyll pair to the spectroscopically characterized acceptors A0, A1, FX, FA and FB in turn. Oxidized P700 is reduced on the lumenal side of the thylakoid membrane by plastocyanin or cytochrome c6. This chain is Photosystem I P700 chlorophyll a apoprotein A1, found in Prochlorococcus marinus (strain AS9601).